A 1151-amino-acid chain; its full sequence is MVSRPAMSPVSPVWPRKPNLWAFWVLRLVLLLSLKSWAEDTLQHCTWLLVLNKFEKVGLHLSKDRFQDHEPIDTVAKVFQKLTDSPIDPSENYLSFPYYLQINFSCPGQNSEELARKGHLMGMKPMVRINYMYSVNFYRWEMENLQILMEAAPMRSTGYCPAEAMCILNWYTPMPFKNGSVVSSVDIYTNGIGPFIPKKRFYVNMNGFLKRDASGKSLFAIGYESLVLKSSHFRLSKSRPLWYTVNHAPVFILGGFYDEKAILFSDSNFQDYVLLELSIDSCWVGSFYCPILGFSATIHDAIATESTLFIRQNQLVYYFTGTYSTLFDKSHGSSRWVRVLPSECIKRLCPVYFSGNGSEYVLALTTGKNEGYIHIGTITDGLVSFEMVPDGWSVCEKLPGKNCSIDWATYITDERNLLLLVKIDSGQFYLVNFNTEFKTLNILYKIPEFIPEAKELDFLVLLDTVTYTNTPMTPKGLFFNTLNNMLYIWGNFILQSYNREEFIFLADFPKESTIKYMVNSFKGQMAVVTENEEIWYFLEGGYDVYQVVPSQGWRTYLKLQKMQKSPLYSTNESLVSLFYQDENLFQLVYLFDVGKERLVKRLLPVGTLMEYNLPKPFTVVNQGNYKMITFTNTCPFKAIHAVDVPKKQHASRTESYVALPPLVSESLGFHNNNTLAVYQGLVYYLLWLHSKYDKPYADPVHDPTWRWWQHKTKDKDYFFYLFSNRLAAEGIYINMNAYQKLYNMSGDYGIPDLFFLDKGNWFTFTVVLLSHQDTFTSSDSQGPTINVDKKLSLSLVLADPECLSVTATREFLLNRNTLLTKIKVIDKKRCSEQGMVGRNIKKTSMLIKVLGAPGNCIQRTYLGDHIQGIRLVPIFIGCPPGKRLAFDVSYTIKHSEEINKHYFDCVIKDAEMPCFLFRDLFQPFFLVQDLVTGDSGSFLGSYVLKVVGGGRTLNTIRDYTEEEIFRYNSPLDTTNSLIWKTKVERTTEDKKFYIMSHESPGVEWLCLENSPCYDIIPQSIYPPEFFFKLLVSNRGVDNSTYCDYKLTFIVHIHGLPLSSKRSSFIVMVSTSFFIALVVFYILFCLVWPHIVKAWVSFRWKIHNMMAPETYSSSSSSGGFTLHSHSSEGSFEGPSRPGTKEDNVQAKRAKVA.

Residues Met-1 to Ala-38 form the signal peptide. At Glu-39–Ser-1063 the chain is on the extracellular side. N-linked (GlcNAc...) asparagine glycosylation occurs at Asn-356. Residues Phe-1064–Cys-1084 traverse the membrane as a helical segment. Over Leu-1085 to Ala-1151 the chain is Cytoplasmic. Positions Ser-1113 to Ser-1123 are enriched in low complexity. Positions Ser-1113 to Ala-1151 are disordered.

Belongs to the CATSPERG family.

The protein localises to the membrane. The protein is Cation channel sperm-associated protein subunit gamma 1 (Catsperg1) of Mus musculus (Mouse).